The following is a 70-amino-acid chain: Non-histone chromosomal protein H6 (70 aa).

Positions 1-70 (MPKRKSATKG…AAGDGAGNAK (70 aa)) are disordered. Residues 30 to 45 (AKPKKAAAPKKAVKGK) are compositionally biased toward basic residues. Basic and acidic residues predominate over residues 46-57 (KAAENGDAKAEA).

This sequence belongs to the HMGN family.

It localises to the nucleus. Its subcellular location is the secreted. Non-histone protein that probably binds to the inner side of nucleosomal DNA, altering the association between the DNA and the nucleosome octamer. Functionally, oncorhyncin III has antibacterial activity against Gram-positive and Gram-negative bacteria at submicromolar concentrations. The polypeptide is Non-histone chromosomal protein H6 (Oncorhynchus mykiss (Rainbow trout)).